The following is a 43-amino-acid chain: Protein PsbN (43 aa).

A helical membrane pass occupies residues 5-27 (TFITIFISCLLVSVTGYALYTAF).

The protein belongs to the PsbN family.

Its subcellular location is the plastid. The protein localises to the chloroplast thylakoid membrane. Its function is as follows. May play a role in photosystem I and II biogenesis. This Chara vulgaris (Common stonewort) protein is Protein PsbN.